We begin with the raw amino-acid sequence, 217 residues long: Monomethylamine corrinoid protein 2 (217 aa).

Residues 1 to 91 (MTNTEIFDKL…ELEKNKKEGD (91 aa)) enclose the B12-binding N-terminal domain. Residues 93-217 (AGLAITFVAE…AAKVALEVMK (125 aa)) enclose the B12-binding domain. His-106 contacts methylcob(III)alamin.

The protein belongs to the methylamine corrinoid protein family. As to quaternary structure, can form a complex with MtmB.

The protein operates within one-carbon metabolism; methanogenesis from methylamine. Its function is as follows. Acts as a methyl group carrier between MtmB and MtbA. This Methanosarcina barkeri protein is Monomethylamine corrinoid protein 2 (mtmC2).